A 205-amino-acid chain; its full sequence is Large ribosomal subunit protein uL4 (205 aa).

The tract at residues 65–99 (RQKGTGGARHGSRKSPTFRHGGVYKGPTPRSHGHD) is disordered.

It belongs to the universal ribosomal protein uL4 family. As to quaternary structure, part of the 50S ribosomal subunit.

In terms of biological role, one of the primary rRNA binding proteins, this protein initially binds near the 5'-end of the 23S rRNA. It is important during the early stages of 50S assembly. It makes multiple contacts with different domains of the 23S rRNA in the assembled 50S subunit and ribosome. Functionally, forms part of the polypeptide exit tunnel. The protein is Large ribosomal subunit protein uL4 of Ruegeria pomeroyi (strain ATCC 700808 / DSM 15171 / DSS-3) (Silicibacter pomeroyi).